We begin with the raw amino-acid sequence, 93 residues long: Small ribosomal subunit protein uS19 (93 aa).

It belongs to the universal ribosomal protein uS19 family.

Protein S19 forms a complex with S13 that binds strongly to the 16S ribosomal RNA. The protein is Small ribosomal subunit protein uS19 (rpsS) of Helicobacter pylori (strain ATCC 700392 / 26695) (Campylobacter pylori).